The primary structure comprises 107 residues: Nucleoid-associated protein RC1_2305 (107 aa).

The protein belongs to the YbaB/EbfC family. In terms of assembly, homodimer.

Its subcellular location is the cytoplasm. It is found in the nucleoid. Functionally, binds to DNA and alters its conformation. May be involved in regulation of gene expression, nucleoid organization and DNA protection. This chain is Nucleoid-associated protein RC1_2305, found in Rhodospirillum centenum (strain ATCC 51521 / SW).